The primary structure comprises 245 residues: DNA repair protein RecO (245 aa).

The protein belongs to the RecO family.

Involved in DNA repair and RecF pathway recombination. This Klebsiella pneumoniae subsp. pneumoniae (strain ATCC 700721 / MGH 78578) protein is DNA repair protein RecO.